We begin with the raw amino-acid sequence, 516 residues long: L-amino-acid oxidase (516 aa).

A signal peptide spans 1–18; it reads MNVFFMFSLLFLAALGSC. C28 and C191 are disulfide-bonded. Residues 61-62, 81-82, R89, and 105-108 contribute to the FAD site; these read MA, EA, and GPMR. Substrate is bound at residue R108. Residue N190 is glycosylated (N-linked (GlcNAc...) (complex) asparagine). Residue H241 coordinates substrate. V279 contributes to the FAD binding site. C349 and C430 are disulfide-bonded. Residue N379 is glycosylated (N-linked (GlcNAc...) (complex) asparagine). A substrate-binding site is contributed by Y390. Residues E475 and 482–487 contribute to the FAD site; that span reads GWIDST. 482 to 483 is a substrate binding site; it reads GW.

As to quaternary structure, homodimer; non-covalently linked. Requires FAD as cofactor. Post-translationally, N-glycosylated at Asn-190 and Asn-379 with bis-sialylated, biantennary, core-fucosylated dodecasaccharide (composed of N-acetylglucosamine, fucose, mannose, galactose, and sialic acid residues). Expressed by the venom gland.

The protein resides in the secreted. It carries out the reaction an L-alpha-amino acid + O2 + H2O = a 2-oxocarboxylate + H2O2 + NH4(+). It catalyses the reaction L-leucine + O2 + H2O = 4-methyl-2-oxopentanoate + H2O2 + NH4(+). The enzyme catalyses L-phenylalanine + O2 + H2O = 3-phenylpyruvate + H2O2 + NH4(+). The catalysed reaction is L-tryptophan + O2 + H2O = indole-3-pyruvate + H2O2 + NH4(+). It carries out the reaction L-methionine + O2 + H2O = 4-methylsulfanyl-2-oxobutanoate + H2O2 + NH4(+). It catalyses the reaction L-isoleucine + O2 + H2O = (S)-3-methyl-2-oxopentanoate + H2O2 + NH4(+). The enzyme catalyses L-arginine + O2 + H2O = 5-guanidino-2-oxopentanoate + H2O2 + NH4(+). The catalysed reaction is L-aspartate + O2 + H2O = oxaloacetate + H2O2 + NH4(+). It carries out the reaction L-histidine + O2 + H2O = 3-(imidazol-5-yl)pyruvate + H2O2 + NH4(+). It catalyses the reaction L-2-aminohexanoate + O2 + H2O = 2-oxohexanoate + H2O2 + NH4(+). The enzyme catalyses L-2-aminopentanoate + O2 + H2O = 2-oxopentanoate + H2O2 + NH4(+). In terms of biological role, catalyzes an oxidative deamination of predominantly hydrophobic and aromatic L-amino acids, thus producing hydrogen peroxide that may contribute to the diverse toxic effects of this enzyme. Shows high affinity for L-Phe, L-Trp, L-Met, L-Leu, and L-Ile, moderate affinity for L-Arg, L-Asp, and L-His, and very low affinity for L-Gln, L-Lys, and L-Ala. Also shows high activity on L-norleucine (L-2-aminohexanoate), and L-norvaline (L-2-aminopentanoate) and a weak activity on L-ornithine and L-aminobutyric acid. Also exhibits diverse biological activities, such as hemorrhage, hemolysis, edema, apoptosis of vascular endothelial cells or tumor cell lines, and antiparasitic activities, as well as regulation of platelet aggregation. Its effect on platelets is controversial, since it either induces aggregation or inhibits agonist-induced aggregation. These different effects are probably due to different experimental conditions. A possible explanation of high efficacy it that LAAO may bind to target cells through its sialylated glycan moiety that would bind to sialic acid-binding lectins (siglec) on target cells. This interaction may result in production of locally high concentrations of hydrogen peroxide in or near the binding interface, leading, in turn to oxidative damage of the siglec or another adjacent cell structural elements. The polypeptide is L-amino-acid oxidase (Calloselasma rhodostoma (Malayan pit viper)).